The following is a 194-amino-acid chain: Ion-translocating oxidoreductase complex subunit B (194 aa).

Residues 1–26 form a hydrophobic region; sequence MSSILIAVIAISALALVFGLILGFAS. One can recognise a 4Fe-4S domain in the interval 32-90; that stretch reads ESDPIVDQIDSILPQTQCGQCGYPGCKPYAEAIANGDTINKCPPGGQATIEKLADLMGV. Positions 49, 52, 57, 73, 114, 117, 120, 124, 144, 147, 150, and 154 each coordinate [4Fe-4S] cluster. 4Fe-4S ferredoxin-type domains lie at 105 to 134 and 135 to 164; these read KIAF…GGTK and ALHT…MIPV.

Belongs to the 4Fe4S bacterial-type ferredoxin family. RnfB subfamily. In terms of assembly, the complex is composed of six subunits: RnfA, RnfB, RnfC, RnfD, RnfE and RnfG. The cofactor is [4Fe-4S] cluster.

It localises to the cell inner membrane. Functionally, part of a membrane-bound complex that couples electron transfer with translocation of ions across the membrane. This Aliivibrio salmonicida (strain LFI1238) (Vibrio salmonicida (strain LFI1238)) protein is Ion-translocating oxidoreductase complex subunit B.